The chain runs to 307 residues: MSVLYPLIQALVLFAVAPLLSGITRVARARLHNRRGPGVLQEYRDIIKLLGRQSVGPDASGWVFRLTPYVMVGVMLTIATALPVVTVGSPLPQLGDLITLLYLFAIARFFFAISGLDTGSPFTAIGASREAMLGVLVEPMLLLGLWVAAQVAGSTNISNITDTVYHWPLSQSIPLVLALCACAFATFIEMGKLPFDLAEAEQELQEGPLSEYSGSGFGVMKWGISLKQLVVLQMFVGVFIPWGQMETFTAGGLLLALVIAIVKLVVGVLVIALFENSMARLRLDITPRITWAGFGFAFLAFVSLLAA.

The Periplasmic portion of the chain corresponds to 1–2 (MS). A helical membrane pass occupies residues 3–23 (VLYPLIQALVLFAVAPLLSGI). The Cytoplasmic segment spans residues 24–67 (TRVARARLHNRRGPGVLQEYRDIIKLLGRQSVGPDASGWVFRLT). A helical transmembrane segment spans residues 68–88 (PYVMVGVMLTIATALPVVTVG). Over 89-93 (SPLPQ) the chain is Periplasmic. A helical transmembrane segment spans residues 94–114 (LGDLITLLYLFAIARFFFAIS). Residues 115–131 (GLDTGSPFTAIGASREA) are Cytoplasmic-facing. A helical transmembrane segment spans residues 132–152 (MLGVLVEPMLLLGLWVAAQVA). At 153–167 (GSTNISNITDTVYHW) the chain is on the periplasmic side. A helical transmembrane segment spans residues 168-188 (PLSQSIPLVLALCACAFATFI). Topologically, residues 189-221 (EMGKLPFDLAEAEQELQEGPLSEYSGSGFGVMK) are cytoplasmic. Residues 222 to 242 (WGISLKQLVVLQMFVGVFIPW) traverse the membrane as a helical segment. Residues 243–253 (GQMETFTAGGL) are Periplasmic-facing. The chain crosses the membrane as a helical span at residues 254-274 (LLALVIAIVKLVVGVLVIALF). Residues 275–284 (ENSMARLRLD) are Cytoplasmic-facing. The chain crosses the membrane as a helical span at residues 285-305 (ITPRITWAGFGFAFLAFVSLL). Residues 306–307 (AA) lie on the Periplasmic side of the membrane.

This sequence belongs to the complex I subunit 1 family. As to quaternary structure, FHL comprises of a formate dehydrogenase, unidentified electron carriers and a hydrogenase (isoenzyme 3). In this non-energy conserving pathway molecular hydrogen and carbodioxide from formate are released.

The protein localises to the cell inner membrane. This Escherichia coli (strain K12) protein is Formate hydrogenlyase subunit 4 (hycD).